Reading from the N-terminus, the 303-residue chain is Sulfate adenylyltransferase subunit 2 (303 aa).

The protein belongs to the PAPS reductase family. CysD subfamily. As to quaternary structure, heterodimer composed of CysD, the smaller subunit, and CysN.

It carries out the reaction sulfate + ATP + H(+) = adenosine 5'-phosphosulfate + diphosphate. It participates in sulfur metabolism; hydrogen sulfide biosynthesis; sulfite from sulfate: step 1/3. Functionally, with CysN forms the ATP sulfurylase (ATPS) that catalyzes the adenylation of sulfate producing adenosine 5'-phosphosulfate (APS) and diphosphate, the first enzymatic step in sulfur assimilation pathway. APS synthesis involves the formation of a high-energy phosphoric-sulfuric acid anhydride bond driven by GTP hydrolysis by CysN coupled to ATP hydrolysis by CysD. The sequence is that of Sulfate adenylyltransferase subunit 2 from Phocaeicola vulgatus (strain ATCC 8482 / DSM 1447 / JCM 5826 / CCUG 4940 / NBRC 14291 / NCTC 11154) (Bacteroides vulgatus).